Here is a 434-residue protein sequence, read N- to C-terminus: V-type ATP synthase beta chain (434 aa).

Belongs to the ATPase alpha/beta chains family.

Its function is as follows. Produces ATP from ADP in the presence of a proton gradient across the membrane. The V-type beta chain is a regulatory subunit. The polypeptide is V-type ATP synthase beta chain (Borreliella afzelii (strain PKo) (Borrelia afzelii)).